The sequence spans 117 residues: NADH-ubiquinone oxidoreductase chain 3 (117 aa).

Transmembrane regions (helical) follow at residues I4 to I24, I60 to I80, and I86 to H106.

It belongs to the complex I subunit 3 family.

It is found in the mitochondrion membrane. The catalysed reaction is a ubiquinone + NADH + 5 H(+)(in) = a ubiquinol + NAD(+) + 4 H(+)(out). Its function is as follows. Core subunit of the mitochondrial membrane respiratory chain NADH dehydrogenase (Complex I) that is believed to belong to the minimal assembly required for catalysis. Complex I functions in the transfer of electrons from NADH to the respiratory chain. The immediate electron acceptor for the enzyme is believed to be ubiquinone. This Drosophila melanogaster (Fruit fly) protein is NADH-ubiquinone oxidoreductase chain 3 (mt:ND3).